Here is a 401-residue protein sequence, read N- to C-terminus: uncharacterized protein (401 aa).

The next 10 membrane-spanning stretches (helical) occupy residues 20 to 40, 49 to 69, 83 to 100, 104 to 121, 140 to 160, 167 to 187, 207 to 227, 248 to 268, 289 to 309, and 357 to 377; these read FFGELLTSLTGAMMGPFMVLY, IMMPMLIISLQPFADIFLTLA, ILTALLLQSAAMTGFVFA, YVFAILYVMNGIGRSLYI, VFAVINAIYSTGLTAGPLVGM, PVWIFALDAAALFIYFLIAAL, FTIYRPVLLLLLLSLPISMLY, MLTIYSAAKALFSCVLQVPLV, LAAAGFACSTSLTMLLVTAAV, and GLILTSFGGEVIFYALAVCLL.

It belongs to the major facilitator superfamily.

It localises to the cell membrane. This is an uncharacterized protein from Bacillus subtilis (strain 168).